The sequence spans 129 residues: Sigma factor-binding protein Crl (129 aa).

Positions 99–119 (TQAEFHKKLVKTLRERFEISV) are essential for activity.

It belongs to the Crl family.

The protein resides in the cytoplasm. In terms of biological role, binds to the sigma-S subunit of RNA polymerase, activating expression of sigma-S-regulated genes. Stimulates RNA polymerase holoenzyme formation and may bind to several other sigma factors, such as sigma-70 and sigma-32. This is Sigma factor-binding protein Crl from Vibrio cholerae serotype O1 (strain ATCC 39541 / Classical Ogawa 395 / O395).